Here is a 213-residue protein sequence, read N- to C-terminus: Phosphatidylserine decarboxylase proenzyme (213 aa).

Ser182 acts as the Schiff-base intermediate with substrate; via pyruvic acid in catalysis. Ser182 is modified (pyruvic acid (Ser); by autocatalysis).

This sequence belongs to the phosphatidylserine decarboxylase family. PSD-A subfamily. Heterodimer of a large membrane-associated beta subunit and a small pyruvoyl-containing alpha subunit. Requires pyruvate as cofactor. Post-translationally, is synthesized initially as an inactive proenzyme. Formation of the active enzyme involves a self-maturation process in which the active site pyruvoyl group is generated from an internal serine residue via an autocatalytic post-translational modification. Two non-identical subunits are generated from the proenzyme in this reaction, and the pyruvate is formed at the N-terminus of the alpha chain, which is derived from the carboxyl end of the proenzyme. The post-translation cleavage follows an unusual pathway, termed non-hydrolytic serinolysis, in which the side chain hydroxyl group of the serine supplies its oxygen atom to form the C-terminus of the beta chain, while the remainder of the serine residue undergoes an oxidative deamination to produce ammonia and the pyruvoyl prosthetic group on the alpha chain.

The protein localises to the cell membrane. The enzyme catalyses a 1,2-diacyl-sn-glycero-3-phospho-L-serine + H(+) = a 1,2-diacyl-sn-glycero-3-phosphoethanolamine + CO2. It participates in phospholipid metabolism; phosphatidylethanolamine biosynthesis; phosphatidylethanolamine from CDP-diacylglycerol: step 2/2. In terms of biological role, catalyzes the formation of phosphatidylethanolamine (PtdEtn) from phosphatidylserine (PtdSer). The protein is Phosphatidylserine decarboxylase proenzyme of Geotalea uraniireducens (strain Rf4) (Geobacter uraniireducens).